The chain runs to 197 residues: Probable GTP-binding protein EngB (197 aa).

An EngB-type G domain is found at 22 to 195 (ELPEVALAGR…WKAIYALITE (174 aa)). GTP contacts are provided by residues 30–37 (GRSNVGKS), 57–61 (GKTQT), 75–78 (DVPG), 142–145 (TKLD), and 174–176 (FSA). Residues Ser-37 and Thr-59 each coordinate Mg(2+).

It belongs to the TRAFAC class TrmE-Era-EngA-EngB-Septin-like GTPase superfamily. EngB GTPase family. The cofactor is Mg(2+).

In terms of biological role, necessary for normal cell division and for the maintenance of normal septation. The sequence is that of Probable GTP-binding protein EngB from Exiguobacterium sp. (strain ATCC BAA-1283 / AT1b).